A 345-amino-acid polypeptide reads, in one-letter code: ATP-dependent kinase YFH7 (345 aa).

An ATP-binding site is contributed by 31–39; sequence GPPGSGKST.

It belongs to the YFH7 family.

In terms of biological role, ATP-dependent kinase that could be involved in endoplasmic reticulum membrane assembly. This Candida glabrata (strain ATCC 2001 / BCRC 20586 / JCM 3761 / NBRC 0622 / NRRL Y-65 / CBS 138) (Yeast) protein is ATP-dependent kinase YFH7 (YFH7).